The chain runs to 689 residues: Glycine--tRNA ligase beta subunit (689 aa).

This sequence belongs to the class-II aminoacyl-tRNA synthetase family. In terms of assembly, tetramer of two alpha and two beta subunits.

The protein localises to the cytoplasm. It carries out the reaction tRNA(Gly) + glycine + ATP = glycyl-tRNA(Gly) + AMP + diphosphate. The polypeptide is Glycine--tRNA ligase beta subunit (Desulforapulum autotrophicum (strain ATCC 43914 / DSM 3382 / VKM B-1955 / HRM2) (Desulfobacterium autotrophicum)).